We begin with the raw amino-acid sequence, 395 residues long: uncharacterized protein (395 aa).

A run of 10 helical transmembrane segments spans residues 19–39, 49–69, 87–107, 137–157, 172–192, 206–226, 252–272, 279–299, 311–331, and 359–379; these read IGIASLIGIVGGLSSVIIAII, VLLIPIVFFIAGLFVDYIYEL, LTWIRGLLKVLLAGAVIAVGG, LVIITGIAGGLGGAFSAPLGT, YINLIPPIIASVVGYLIFYLI, TINIHDFLLFILGAFFCSLIA, LIGGILVAVISYFIPEVMGMG, LFIMEFSLVFLVLLLIGKILA, GLVFPSMCIGAISGIIFGSLI, and VLCTEIFGFDFAVPASIGAVI.

This sequence belongs to the chloride channel (TC 2.A.49) family.

It is found in the cell membrane. This is an uncharacterized protein from Methanocaldococcus jannaschii (strain ATCC 43067 / DSM 2661 / JAL-1 / JCM 10045 / NBRC 100440) (Methanococcus jannaschii).